We begin with the raw amino-acid sequence, 339 residues long: GTPase Obg (339 aa).

Residues Met1–Ile159 enclose the Obg domain. Residues Ala160–Glu327 enclose the OBG-type G domain. Residues Gly166–Ser173, Phe191–Tyr195, Asp212–Gly215, Ser279–Asp282, and Ser308–Val310 contribute to the GTP site. Mg(2+) contacts are provided by Ser173 and Thr193.

Belongs to the TRAFAC class OBG-HflX-like GTPase superfamily. OBG GTPase family. Monomer. The cofactor is Mg(2+).

It localises to the cytoplasm. In terms of biological role, an essential GTPase which binds GTP, GDP and possibly (p)ppGpp with moderate affinity, with high nucleotide exchange rates and a fairly low GTP hydrolysis rate. Plays a role in control of the cell cycle, stress response, ribosome biogenesis and in those bacteria that undergo differentiation, in morphogenesis control. In Bartonella bacilliformis (strain ATCC 35685 / KC583 / Herrer 020/F12,63), this protein is GTPase Obg.